We begin with the raw amino-acid sequence, 767 residues long: Phosphoribosylformylglycinamidine synthase subunit PurL (767 aa).

Residue His-46 is part of the active site. ATP contacts are provided by Tyr-49 and Lys-88. Glu-90 is a binding site for Mg(2+). Residues 91–94 (SHNH) and Arg-113 each bind substrate. His-92 acts as the Proton acceptor in catalysis. Residue Asp-114 participates in Mg(2+) binding. Gln-237 contributes to the substrate binding site. A Mg(2+)-binding site is contributed by Asp-265. Residue 309–311 (ESQ) participates in substrate binding. 2 residues coordinate ATP: Asp-498 and Gly-535. Asn-536 contacts Mg(2+). Ser-538 provides a ligand contact to substrate.

It belongs to the FGAMS family. In terms of assembly, monomer. Part of the FGAM synthase complex composed of 1 PurL, 1 PurQ and 2 PurS subunits.

Its subcellular location is the cytoplasm. The enzyme catalyses N(2)-formyl-N(1)-(5-phospho-beta-D-ribosyl)glycinamide + L-glutamine + ATP + H2O = 2-formamido-N(1)-(5-O-phospho-beta-D-ribosyl)acetamidine + L-glutamate + ADP + phosphate + H(+). The protein operates within purine metabolism; IMP biosynthesis via de novo pathway; 5-amino-1-(5-phospho-D-ribosyl)imidazole from N(2)-formyl-N(1)-(5-phospho-D-ribosyl)glycinamide: step 1/2. Functionally, part of the phosphoribosylformylglycinamidine synthase complex involved in the purines biosynthetic pathway. Catalyzes the ATP-dependent conversion of formylglycinamide ribonucleotide (FGAR) and glutamine to yield formylglycinamidine ribonucleotide (FGAM) and glutamate. The FGAM synthase complex is composed of three subunits. PurQ produces an ammonia molecule by converting glutamine to glutamate. PurL transfers the ammonia molecule to FGAR to form FGAM in an ATP-dependent manner. PurS interacts with PurQ and PurL and is thought to assist in the transfer of the ammonia molecule from PurQ to PurL. The polypeptide is Phosphoribosylformylglycinamidine synthase subunit PurL (Anaeromyxobacter sp. (strain Fw109-5)).